The sequence spans 695 residues: tRNA wybutosine-synthesizing protein 4 (695 aa).

S-adenosyl-L-methionine is bound by residues K38, R88, G115, 146–147 (DY), 196–197 (DL), and E224. The Proton donor; for both methylation and methoxycarbonylation activities role is filled by R88. The active-site Proton acceptor; for methoxycarbonylation activity is the Y229.

Belongs to the methyltransferase superfamily. LCMT family.

The protein resides in the cytoplasm. Its subcellular location is the mitochondrion. It catalyses the reaction 7-[(3S)-3-amino-3-carboxypropyl]wyosine(37) in tRNA(Phe) + S-adenosyl-L-methionine = 7-[(3S)-(3-amino-3-methoxycarbonyl)propyl]wyosine(37) in tRNA(Phe) + S-adenosyl-L-homocysteine. The enzyme catalyses 7-[(3S)-(3-amino-3-methoxycarbonyl)propyl]wyosine(37) in tRNA(Phe) + S-adenosyl-L-methionine + CO2 = wybutosine(37) in tRNA(Phe) + S-adenosyl-L-homocysteine + 2 H(+). It functions in the pathway tRNA modification; wybutosine-tRNA(Phe) biosynthesis. S-adenosyl-L-methionine-dependent methyltransferase that acts as a component of the wybutosine biosynthesis pathway. Wybutosine is a hyper modified guanosine with a tricyclic base found at the 3'-position adjacent to the anticodon of eukaryotic phenylalanine tRNA. Catalyzes the final 2 independent reactions, methylation of the alpha-carboxy group of wybutosine-72 to form wybutosine-58, and methoxycarbonylation of alpha-amino group of wybutosine-58 through the fixation of CO(2) to complete wybutosine. This Saccharomyces cerevisiae (strain ATCC 204508 / S288c) (Baker's yeast) protein is tRNA wybutosine-synthesizing protein 4 (PPM2).